The following is a 64-amino-acid chain: Large ribosomal subunit protein bL35 (64 aa).

Disordered regions lie at residues 1 to 22 (MPKA…TGKI) and 34 to 64 (EHKP…LLNG). Over residues 34–48 (EHKPSTRTRRLDGHT) the composition is skewed to basic and acidic residues. Residues 50-64 (VSANDTQRVNSLLNG) are compositionally biased toward polar residues.

The protein belongs to the bacterial ribosomal protein bL35 family.

This chain is Large ribosomal subunit protein bL35, found in Mycobacterium leprae (strain Br4923).